The chain runs to 161 residues: Ribosomal RNA large subunit methyltransferase H (161 aa).

Residues Leu-78, Gly-110, and 129–134 (LSRLTF) contribute to the S-adenosyl-L-methionine site.

The protein belongs to the RNA methyltransferase RlmH family. Homodimer.

The protein localises to the cytoplasm. It catalyses the reaction pseudouridine(1915) in 23S rRNA + S-adenosyl-L-methionine = N(3)-methylpseudouridine(1915) in 23S rRNA + S-adenosyl-L-homocysteine + H(+). Functionally, specifically methylates the pseudouridine at position 1915 (m3Psi1915) in 23S rRNA. The protein is Ribosomal RNA large subunit methyltransferase H of Heliobacterium modesticaldum (strain ATCC 51547 / Ice1).